A 184-amino-acid polypeptide reads, in one-letter code: Protein GrpE (184 aa).

Over residues methionine 1–alanine 26 the composition is skewed to polar residues. A disordered region spans residues methionine 1–aspartate 34.

Belongs to the GrpE family. Homodimer.

The protein resides in the cytoplasm. Its function is as follows. Participates actively in the response to hyperosmotic and heat shock by preventing the aggregation of stress-denatured proteins, in association with DnaK and GrpE. It is the nucleotide exchange factor for DnaK and may function as a thermosensor. Unfolded proteins bind initially to DnaJ; upon interaction with the DnaJ-bound protein, DnaK hydrolyzes its bound ATP, resulting in the formation of a stable complex. GrpE releases ADP from DnaK; ATP binding to DnaK triggers the release of the substrate protein, thus completing the reaction cycle. Several rounds of ATP-dependent interactions between DnaJ, DnaK and GrpE are required for fully efficient folding. This Acinetobacter baumannii (strain AB307-0294) protein is Protein GrpE.